A 161-amino-acid polypeptide reads, in one-letter code: PTS system glucose-specific EIIA component (161 aa).

The PTS EIIA type-1 domain maps to Asp31–Asn135. Zn(2+)-binding residues include His68 and His83. Catalysis depends on His83, which acts as the Tele-phosphohistidine intermediate; for EIIA activity. His83 is subject to Phosphohistidine; by HPr.

It depends on Zn(2+) as a cofactor.

The protein localises to the cytoplasm. In terms of biological role, the phosphoenolpyruvate-dependent sugar phosphotransferase system (sugar PTS), a major carbohydrate active transport system, catalyzes the phosphorylation of incoming sugar substrates concomitantly with their translocation across the cell membrane. The enzyme II complex composed of PtsG and Crr is involved in glucose transport. This is PTS system glucose-specific EIIA component (crr) from Buchnera aphidicola subsp. Acyrthosiphon pisum (strain APS) (Acyrthosiphon pisum symbiotic bacterium).